The following is a 207-amino-acid chain: Holliday junction branch migration complex subunit RuvA (207 aa).

The segment at 1-63 is domain I; sequence MIGMLKGRVE…QDAITLFGFL (63 aa). Positions 64 to 142 are domain II; it reads DARSKRMFLQ…VDKIETGEPT (79 aa). A flexible linker region spans residues 143-153; that stretch reads STQRIPTDKGV. The segment at 153-207 is domain III; that stretch reads VEQVVEGLMSLGWKQADAQQAVDSVISSSGIALPLEEGNVPTVLRLALTSLDRGR.

Belongs to the RuvA family. As to quaternary structure, homotetramer. Forms an RuvA(8)-RuvB(12)-Holliday junction (HJ) complex. HJ DNA is sandwiched between 2 RuvA tetramers; dsDNA enters through RuvA and exits via RuvB. An RuvB hexamer assembles on each DNA strand where it exits the tetramer. Each RuvB hexamer is contacted by two RuvA subunits (via domain III) on 2 adjacent RuvB subunits; this complex drives branch migration. In the full resolvosome a probable DNA-RuvA(4)-RuvB(12)-RuvC(2) complex forms which resolves the HJ.

It localises to the cytoplasm. The RuvA-RuvB-RuvC complex processes Holliday junction (HJ) DNA during genetic recombination and DNA repair, while the RuvA-RuvB complex plays an important role in the rescue of blocked DNA replication forks via replication fork reversal (RFR). RuvA specifically binds to HJ cruciform DNA, conferring on it an open structure. The RuvB hexamer acts as an ATP-dependent pump, pulling dsDNA into and through the RuvAB complex. HJ branch migration allows RuvC to scan DNA until it finds its consensus sequence, where it cleaves and resolves the cruciform DNA. The chain is Holliday junction branch migration complex subunit RuvA from Bifidobacterium animalis subsp. lactis (strain AD011).